The primary structure comprises 320 residues: Cytosolic Fe-S cluster assembly factor NUBP1 (320 aa).

The residue at position 1 (Met-1) is an N-acetylmethionine. [4Fe-4S] cluster contacts are provided by Cys-8, Cys-22, Cys-25, and Cys-31. Residue 62-69 (GKGGVGKS) participates in ATP binding. Cys-235 and Cys-238 together coordinate [4Fe-4S] cluster. Phosphoserine is present on Ser-319.

This sequence belongs to the Mrp/NBP35 ATP-binding proteins family. NUBP1/NBP35 subfamily. As to quaternary structure, heterotetramer of 2 NUBP1 and 2 NUBP2 chains. Interacts with KIFC1. Interacts with NUBP2. Interacts with the BBS/CCT complex subunit CCT1. [4Fe-4S] cluster serves as cofactor.

The protein localises to the cytoplasm. The protein resides in the nucleus. It is found in the cell projection. Its subcellular location is the cytoskeleton. It localises to the cilium axoneme. The protein localises to the cilium basal body. The protein resides in the microtubule organizing center. It is found in the centrosome. Its subcellular location is the centriole. In terms of biological role, component of the cytosolic iron-sulfur (Fe/S) protein assembly (CIA) machinery. Required for maturation of extramitochondrial Fe-S proteins. The NUBP1-NUBP2 heterotetramer forms a Fe-S scaffold complex, mediating the de novo assembly of an Fe-S cluster and its transfer to target apoproteins. Implicated in the regulation of centrosome duplication. Negatively regulates cilium formation and structure. The polypeptide is Cytosolic Fe-S cluster assembly factor NUBP1 (Homo sapiens (Human)).